We begin with the raw amino-acid sequence, 306 residues long: Glutaminase (306 aa).

Substrate is bound by residues Ser61, Asn111, Glu155, Asn162, Tyr186, Tyr238, and Val256.

The protein belongs to the glutaminase family. As to quaternary structure, homotetramer.

The enzyme catalyses L-glutamine + H2O = L-glutamate + NH4(+). The protein is Glutaminase of Pseudomonas entomophila (strain L48).